Here is a 193-residue protein sequence, read N- to C-terminus: MNMYATLILALALSMDAFAASICKGAALHRPHFREAIRTGLIFGLAEACTPLIGWSLGLYASQYIIEWDHWVAFTLLFILGCRMITESFKTKQEKKCESPCRHNSIVLITTAIATSLDAMAIGIGLAFLEVNIVHTAMAIGMMTMIMATLGMLIGRYIGPRLGKRAELIGGLILIAIGFNILFEHLELFMYAK.

The next 6 membrane-spanning stretches (helical) occupy residues 3–23, 41–61, 65–85, 106–126, 133–153, and 169–189; these read MYATLILALALSMDAFAASIC, LIFGLAEACTPLIGWSLGLYA, IIEWDHWVAFTLLFILGCRMI, IVLITTAIATSLDAMAIGIGL, IVHTAMAIGMMTMIMATLGML, and IGGLILIAIGFNILFEHLELF.

The protein belongs to the MntP (TC 9.B.29) family.

It is found in the cell inner membrane. In terms of biological role, probably functions as a manganese efflux pump. The sequence is that of Putative manganese efflux pump MntP from Photorhabdus laumondii subsp. laumondii (strain DSM 15139 / CIP 105565 / TT01) (Photorhabdus luminescens subsp. laumondii).